The chain runs to 85 residues: Small ribosomal subunit protein bS16 (85 aa).

Belongs to the bacterial ribosomal protein bS16 family.

The protein is Small ribosomal subunit protein bS16 of Clostridium novyi (strain NT).